An 809-amino-acid chain; its full sequence is Sucrose synthase 2 (809 aa).

The GT-B glycosyltransferase stretch occupies residues 278–756; that stretch reads MVFNVVILSP…GLQRIYERYT (479 aa).

The protein belongs to the glycosyltransferase 1 family. Plant sucrose synthase subfamily.

It carries out the reaction an NDP-alpha-D-glucose + D-fructose = a ribonucleoside 5'-diphosphate + sucrose + H(+). Its function is as follows. Sucrose-cleaving enzyme that provides UDP-glucose and fructose for various metabolic pathways. This is Sucrose synthase 2 (SUS2) from Pisum sativum (Garden pea).